The following is a 120-amino-acid chain: Large ribosomal subunit protein bL20 (120 aa).

The protein belongs to the bacterial ribosomal protein bL20 family.

Binds directly to 23S ribosomal RNA and is necessary for the in vitro assembly process of the 50S ribosomal subunit. It is not involved in the protein synthesizing functions of that subunit. This chain is Large ribosomal subunit protein bL20, found in Baumannia cicadellinicola subsp. Homalodisca coagulata.